A 107-amino-acid chain; its full sequence is Universal stress protein B homolog (107 aa).

2 consecutive transmembrane segments (helical) span residues 6–25 (TILF…YVTA) and 89–106 (LFIL…VAFM).

It belongs to the universal stress protein B family.

It localises to the cell inner membrane. In Vibrio cholerae serotype O1 (strain ATCC 39541 / Classical Ogawa 395 / O395), this protein is Universal stress protein B homolog.